A 109-amino-acid chain; its full sequence is MSITDVLSADDIAAALQECRDPDTFEPQKFFQTSGLSKMSANQVKDVFRFIDNDQSGYLDEEELKFFLQKFESGARELTESETKSLMAAADNDGDGKIGAEEFQEMVHS.

Serine 2 carries the post-translational modification N-acetylserine. EF-hand domains follow at residues methionine 39 to glycine 74 and leucine 78 to serine 109. Positions 52, 54, 56, 58, 63, 91, 93, 95, 97, and 102 each coordinate Ca(2+).

The protein belongs to the parvalbumin family.

Its function is as follows. Has some calmodulin-like activity with respect to enzyme activation and growth regulation. Binds two calcium ions. This chain is Oncomodulin-1 (OCM), found in Homo sapiens (Human).